Consider the following 95-residue polypeptide: MNSKLTALIFLGLVAIASCGWINEEKIQKKIDEKIGNNILGGMAKAVVHKLAKGEFQCVANIDTMGNCETHCQKTSGEKGFCHGTKCKCGKPLSY.

The N-terminal stretch at 1–19 (MNSKLTALIFLGLVAIASC) is a signal peptide. Positions 55 to 95 (EFQCVANIDTMGNCETHCQKTSGEKGFCHGTKCKCGKPLSY) constitute a BetaSPN-type CS-alpha/beta domain. Cystine bridges form between C58–C82, C68–C87, and C72–C89.

Belongs to the long chain scorpion toxin family. Class 3 subfamily. Contains 3 disulfide bonds. Expressed by the venom gland.

Its subcellular location is the secreted. In terms of biological role, has antibacterial activity against B.subtilis, K.pneumoniae and P.aeruginosa. This is Heteroscorpine-1 from Heterometrus laoticus (Thai giant scorpion).